The primary structure comprises 357 residues: UDP-N-acetylglucosamine--N-acetylmuramyl-(pentapeptide) pyrophosphoryl-undecaprenol N-acetylglucosamine transferase (357 aa).

UDP-N-acetyl-alpha-D-glucosamine is bound by residues 14-16 (TGG), N128, R169, S193, I248, and Q292.

It belongs to the glycosyltransferase 28 family. MurG subfamily.

The protein resides in the cell inner membrane. It catalyses the reaction di-trans,octa-cis-undecaprenyl diphospho-N-acetyl-alpha-D-muramoyl-L-alanyl-D-glutamyl-meso-2,6-diaminopimeloyl-D-alanyl-D-alanine + UDP-N-acetyl-alpha-D-glucosamine = di-trans,octa-cis-undecaprenyl diphospho-[N-acetyl-alpha-D-glucosaminyl-(1-&gt;4)]-N-acetyl-alpha-D-muramoyl-L-alanyl-D-glutamyl-meso-2,6-diaminopimeloyl-D-alanyl-D-alanine + UDP + H(+). It functions in the pathway cell wall biogenesis; peptidoglycan biosynthesis. In terms of biological role, cell wall formation. Catalyzes the transfer of a GlcNAc subunit on undecaprenyl-pyrophosphoryl-MurNAc-pentapeptide (lipid intermediate I) to form undecaprenyl-pyrophosphoryl-MurNAc-(pentapeptide)GlcNAc (lipid intermediate II). The protein is UDP-N-acetylglucosamine--N-acetylmuramyl-(pentapeptide) pyrophosphoryl-undecaprenol N-acetylglucosamine transferase of Bdellovibrio bacteriovorus (strain ATCC 15356 / DSM 50701 / NCIMB 9529 / HD100).